The primary structure comprises 225 residues: NAD(P)H-quinone oxidoreductase subunit K, chloroplastic (225 aa).

Residues Cys-43, Cys-44, Cys-108, and Cys-139 each contribute to the [4Fe-4S] cluster site.

This sequence belongs to the complex I 20 kDa subunit family. NDH is composed of at least 16 different subunits, 5 of which are encoded in the nucleus. Requires [4Fe-4S] cluster as cofactor.

It is found in the plastid. Its subcellular location is the chloroplast thylakoid membrane. The enzyme catalyses a plastoquinone + NADH + (n+1) H(+)(in) = a plastoquinol + NAD(+) + n H(+)(out). It carries out the reaction a plastoquinone + NADPH + (n+1) H(+)(in) = a plastoquinol + NADP(+) + n H(+)(out). Its function is as follows. NDH shuttles electrons from NAD(P)H:plastoquinone, via FMN and iron-sulfur (Fe-S) centers, to quinones in the photosynthetic chain and possibly in a chloroplast respiratory chain. The immediate electron acceptor for the enzyme in this species is believed to be plastoquinone. Couples the redox reaction to proton translocation, and thus conserves the redox energy in a proton gradient. This Nandina domestica (Heavenly bamboo) protein is NAD(P)H-quinone oxidoreductase subunit K, chloroplastic.